A 247-amino-acid chain; its full sequence is 5'-nucleotidase SurE (247 aa).

The a divalent metal cation site is built by Asp8, Asp9, Ser39, and Asn91.

It belongs to the SurE nucleotidase family. A divalent metal cation is required as a cofactor.

It is found in the cytoplasm. The enzyme catalyses a ribonucleoside 5'-phosphate + H2O = a ribonucleoside + phosphate. In terms of biological role, nucleotidase that shows phosphatase activity on nucleoside 5'-monophosphates. This is 5'-nucleotidase SurE from Azoarcus sp. (strain BH72).